Consider the following 730-residue polypeptide: Polyphosphate kinase (730 aa).

Positions 1-21 (MMRHDRNVTEIDAETRPDENL) are enriched in basic and acidic residues. The interval 1 to 39 (MMRHDRNVTEIDAETRPDENLWHSGDSAVGAPPAATPAA) is disordered. Residue Asn86 coordinates ATP. Mg(2+)-binding residues include Arg423 and Arg453. Residue His483 is the Phosphohistidine intermediate of the active site. Residues Tyr516, Arg612, and His640 each coordinate ATP.

This sequence belongs to the polyphosphate kinase 1 (PPK1) family. It depends on Mg(2+) as a cofactor. Post-translationally, an intermediate of this reaction is the autophosphorylated ppk in which a phosphate is covalently linked to a histidine residue through a N-P bond.

It carries out the reaction [phosphate](n) + ATP = [phosphate](n+1) + ADP. Functionally, catalyzes the reversible transfer of the terminal phosphate of ATP to form a long-chain polyphosphate (polyP). The sequence is that of Polyphosphate kinase from Mycobacterium avium (strain 104).